Reading from the N-terminus, the 291-residue chain is Isopentenyl-diphosphate Delta-isomerase I, chloroplastic (291 aa).

The N-terminal 52 residues, 1–52, are a transit peptide targeting the chloroplast; it reads MSTASLFSFPSFHLRSLLPSLSSSSSSSSSRFAPPRLSPIRSPAPRTQLSVR. Residue Ser2 is modified to N-acetylthreonine. The segment covering 20 to 39 has biased composition (low complexity); it reads SLSSSSSSSSSRFAPPRLSP. A disordered region spans residues 20–43; the sequence is SLSSSSSSSSSRFAPPRLSPIRSP. Residue Lys95 participates in substrate binding. Mg(2+) contacts are provided by His99 and His111. Residues 109 to 261 form the Nudix hydrolase domain; sequence LLHRAFSVFL…AVKLSPWFRL (153 aa). 2 residues coordinate substrate: Arg130 and Lys134. The active site involves Cys146. Residue Ser147 participates in substrate binding. The short motif at 147 to 177 is the Nudix box element; sequence SHPLYRESELIEENVLGVRNAAQRKLFDELG. Mg(2+)-binding residues include Glu206 and Glu208. Residue Glu208 is part of the active site.

The protein belongs to the IPP isomerase type 1 family. Requires Mg(2+) as cofactor.

The protein localises to the plastid. Its subcellular location is the chloroplast. It localises to the cytoplasm. It carries out the reaction isopentenyl diphosphate = dimethylallyl diphosphate. It functions in the pathway isoprenoid biosynthesis; dimethylallyl diphosphate biosynthesis; dimethylallyl diphosphate from isopentenyl diphosphate: step 1/1. It participates in porphyrin-containing compound metabolism; chlorophyll biosynthesis. Functionally, catalyzes the 1,3-allylic rearrangement of the homoallylic substrate isopentenyl (IPP) to its highly electrophilic allylic isomer, dimethylallyl diphosphate (DMAPP). This Arabidopsis thaliana (Mouse-ear cress) protein is Isopentenyl-diphosphate Delta-isomerase I, chloroplastic (IPP1).